Consider the following 326-residue polypeptide: Ribosomal large subunit pseudouridine synthase D (326 aa).

The active site involves D144.

Belongs to the pseudouridine synthase RluA family.

The protein localises to the cytoplasm. It catalyses the reaction uridine(1911/1915/1917) in 23S rRNA = pseudouridine(1911/1915/1917) in 23S rRNA. Its function is as follows. Responsible for synthesis of pseudouridine from uracil at positions 1911, 1915 and 1917 in 23S ribosomal RNA. The sequence is that of Ribosomal large subunit pseudouridine synthase D from Borreliella burgdorferi (strain ATCC 35210 / DSM 4680 / CIP 102532 / B31) (Borrelia burgdorferi).